The sequence spans 436 residues: Cholecystokinin receptor type A (436 aa).

Residues 1–41 (MDVVDSLLMNGSNITPPCELGLENETLFCLDQPQPSKEWQS) are Extracellular-facing. Residues N10 and N24 are each glycosylated (N-linked (GlcNAc...) asparagine). The cysteines at positions 18 and 29 are disulfide-linked. The chain crosses the membrane as a helical span at residues 42-67 (AVQILLYSFIFLLSVLGNTLVITVLI). The Cytoplasmic segment spans residues 68–77 (RNKRMRTVTN). Residues 78 to 104 (IFLLSLAVSDLMLCLFCMPFNLIPNLL) form a helical membrane-spanning segment. Residues 105 to 115 (KDFIFGSAVCK) are Extracellular-facing. A disulfide bridge connects residues C114 and C196. The chain crosses the membrane as a helical span at residues 116–137 (TTTYFMGTSVSVSTFNLVAISL). Over 138 to 157 (ERYGAICRPLQSRVWQTKSH) the chain is Cytoplasmic. Residues 158-178 (ALKVIAATWCLSFTIMTPYPI) form a helical membrane-spanning segment. The Extracellular portion of the chain corresponds to 179-210 (YSNLVPFTKNNNQTANMCRFLLPSDAMQQSWQ). N190 carries N-linked (GlcNAc...) asparagine glycosylation. A helical transmembrane segment spans residues 211 to 234 (TFLLLILFLIPGVVMVVAYGLISL). At 235–321 (ELYQGIKFDA…NLIAKKRVIR (87 aa)) the chain is on the cytoplasmic side. Positions 252–280 (EKRLSSGGGGGGGSSSSRYEDSDGCYLQK) are disordered. Residues 322 to 342 (MLIVIVVLFFLCWMPIFSANA) traverse the membrane as a helical segment. Over 343-357 (WRAYDTVSAEKHLSG) the chain is Extracellular. A helical membrane pass occupies residues 358–381 (TPISFILLLSYTSSCVNPIIYCFM). The Cytoplasmic segment spans residues 382 to 436 (NKRFRLGFMATFPCCPNPGPTGVRGEVGEEEDGRTIRASLSRYSYSHMSTSAPPH). The S-palmitoyl cysteine moiety is linked to residue C395.

The protein belongs to the G-protein coupled receptor 1 family.

The protein localises to the cell membrane. In terms of biological role, receptor for cholecystokinin. Mediates pancreatic growth and enzyme secretion, smooth muscle contraction of the gall bladder and stomach. Has a 1000-fold higher affinity for CCK rather than for gastrin. It modulates feeding and dopamine-induced behavior in the central and peripheral nervous system. This receptor mediates its action by association with G proteins that activate a phosphatidylinositol-calcium second messenger system. This Mus musculus (Mouse) protein is Cholecystokinin receptor type A (Cckar).